The sequence spans 181 residues: Inner membrane-spanning protein YciB (181 aa).

The next 5 helical transmembrane spans lie at 3-23 (LLFDFFPIVLFFIVYKFFGIY), 54-74 (SLAIIMVLGGATLFFQNPWFI), 81-101 (IYWLSALVFYGSGYIGSKPLI), 119-139 (LNLAWTLFFIVMGALNLYVAY), and 149-169 (FKLFGGVGFTLLFVLIQAFYL).

Belongs to the YciB family.

The protein resides in the cell inner membrane. Plays a role in cell envelope biogenesis, maintenance of cell envelope integrity and membrane homeostasis. The protein is Inner membrane-spanning protein YciB of Legionella pneumophila (strain Corby).